The primary structure comprises 166 residues: Probable chemoreceptor glutamine deamidase CheD 1 (166 aa).

The protein belongs to the CheD family.

It catalyses the reaction L-glutaminyl-[protein] + H2O = L-glutamyl-[protein] + NH4(+). Functionally, probably deamidates glutamine residues to glutamate on methyl-accepting chemotaxis receptors (MCPs), playing an important role in chemotaxis. In Leptospira interrogans serogroup Icterohaemorrhagiae serovar copenhageni (strain Fiocruz L1-130), this protein is Probable chemoreceptor glutamine deamidase CheD 1.